Reading from the N-terminus, the 386-residue chain is Cytochrome b (386 aa).

A run of 4 helical transmembrane segments spans residues 32 to 52 (LGSL…FLAM), 76 to 98 (WFIR…IHIG), 113 to 133 (VWNV…LGYC), and 179 to 199 (FFAF…MHFM). The heme b site is built by His82 and His96. Heme b contacts are provided by His183 and His197. Residue His202 coordinates a ubiquinone. 4 helical membrane-spanning segments follow: residues 225-245 (FIFK…LFVF), 289-309 (LLGV…PITD), 321-341 (FSKF…HLGE), and 348-368 (FVVM…VIVP).

This sequence belongs to the cytochrome b family. As to quaternary structure, fungal cytochrome b-c1 complex contains 10 subunits; 3 respiratory subunits, 2 core proteins and 5 low-molecular weight proteins. Cytochrome b-c1 complex is a homodimer. Heme b is required as a cofactor.

It is found in the mitochondrion inner membrane. Its function is as follows. Component of the ubiquinol-cytochrome c reductase complex (complex III or cytochrome b-c1 complex) that is part of the mitochondrial respiratory chain. The b-c1 complex mediates electron transfer from ubiquinol to cytochrome c. Contributes to the generation of a proton gradient across the mitochondrial membrane that is then used for ATP synthesis. The polypeptide is Cytochrome b (COB) (Kluyveromyces lactis (strain ATCC 8585 / CBS 2359 / DSM 70799 / NBRC 1267 / NRRL Y-1140 / WM37) (Yeast)).